Reading from the N-terminus, the 337-residue chain is Tryptophan--tRNA ligase 2 (337 aa).

Residues 13–15 (QPT) and 22–23 (GN) contribute to the ATP site. The short motif at 14–23 (PTAGSFHLGN) is the 'HIGH' region element. Residue Asp139 participates in L-tryptophan binding. Residues 151–153 (GED), Ile190, and 199–203 (KMSKS) each bind ATP. Residues 199-203 (KMSKS) carry the 'KMSKS' region motif.

This sequence belongs to the class-I aminoacyl-tRNA synthetase family. As to quaternary structure, homodimer.

The protein resides in the cytoplasm. It carries out the reaction tRNA(Trp) + L-tryptophan + ATP = L-tryptophyl-tRNA(Trp) + AMP + diphosphate + H(+). Catalyzes the attachment of tryptophan to tRNA(Trp). The sequence is that of Tryptophan--tRNA ligase 2 from Streptomyces avermitilis (strain ATCC 31267 / DSM 46492 / JCM 5070 / NBRC 14893 / NCIMB 12804 / NRRL 8165 / MA-4680).